Here is a 468-residue protein sequence, read N- to C-terminus: Glucose-dependent insulinotropic receptor (468 aa).

Residues 1–6 (MESSFS) lie on the Extracellular side of the membrane. The helical transmembrane segment at 7 to 27 (FGVILAVLTILIIAVNALVVV) threads the bilayer. The Cytoplasmic portion of the chain corresponds to 28–37 (AMLLSIYKND). A helical transmembrane segment spans residues 38 to 58 (GVGLCFTLNLAVADTLIGVAI). At 59–81 (SGLVTDQLSSSAQHTQKTLCSLR) the chain is on the extracellular side. Residues 82–102 (MAFVTSSAAASVLTVMLIAFD) traverse the membrane as a helical segment. Topologically, residues 103–125 (RYLAIKQPLRYFQIMNGLVAGGC) are cytoplasmic. The chain crosses the membrane as a helical span at residues 126-146 (IAGLWLISYLIGFLPLGVSIF). The Extracellular portion of the chain corresponds to 147 to 164 (QQTTYHGPCTFFAVFHPR). Residues 165–185 (FVLTLSCAGFFPAVLLFVFFY) traverse the membrane as a helical segment. Residues 186–226 (CDMLKIASVHSQHIRKMEHAGAMVGACRPPRPVNDFKAVRT) lie on the Cytoplasmic side of the membrane. Residues 227 to 247 (VSVLIGSFTLSWSPFLITSIV) form a helical membrane-spanning segment. The Extracellular portion of the chain corresponds to 248–262 (QVACHKCCLYQVLEK). A helical transmembrane segment spans residues 263-283 (YLWLLGVGNSLLNPLIYAYWQ). Over 284–468 (REVRQQLCHM…MSDPLRTCRG (185 aa)) the chain is Cytoplasmic.

This sequence belongs to the G-protein coupled receptor 1 family. Expression restricted to the beta-cells of pancreatic islets.

It is found in the cell membrane. Receptor for the endogenous fatty-acid ethanolamide oleoylethanolamide (OEA) and lysophosphatidylcholine (LPC). Functions as a glucose-dependent insulinotropic receptor. The activity of this receptor is mediated by G proteins which activate adenylate cyclase. Seems to act through a G(s) mediated pathway. The protein is Glucose-dependent insulinotropic receptor (Gpr119) of Rattus norvegicus (Rat).